Here is a 263-residue protein sequence, read N- to C-terminus: Ribosomal RNA small subunit methyltransferase J (263 aa).

S-adenosyl-L-methionine contacts are provided by residues 108–109 (RD), 124–125 (ER), and aspartate 178.

Belongs to the methyltransferase superfamily. RsmJ family.

The protein resides in the cytoplasm. It carries out the reaction guanosine(1516) in 16S rRNA + S-adenosyl-L-methionine = N(2)-methylguanosine(1516) in 16S rRNA + S-adenosyl-L-homocysteine + H(+). In terms of biological role, specifically methylates the guanosine in position 1516 of 16S rRNA. This chain is Ribosomal RNA small subunit methyltransferase J, found in Idiomarina loihiensis (strain ATCC BAA-735 / DSM 15497 / L2-TR).